Consider the following 294-residue polypeptide: Serine/threonine-protein kinase Aurora-1 (294 aa).

The region spanning 31-282 is the Protein kinase domain; the sequence is FDIGKPLGRG…LHKLLEHPWI (252 aa). ATP-binding positions include 37-45 and lysine 60; that span reads LGRGKFGHV. Residue aspartate 154 is the Proton acceptor of the active site. A Phosphoserine modification is found at serine 176. The residue at position 185 (threonine 185) is a Phosphothreonine.

The protein belongs to the protein kinase superfamily. Ser/Thr protein kinase family. Aurora subfamily. In terms of assembly, interacts with TPX2. Phosphorylation at Thr-185 may regulate activity and degradation of AUR1 in a cell cycle dependent manner. In terms of tissue distribution, abundant in roots, flowers and flower buds, low or absent in expanded leaves, stems and siliques.

The protein resides in the nucleus membrane. It localises to the cytoplasm. It is found in the cytoskeleton. Its subcellular location is the spindle. The protein localises to the spindle pole. The protein resides in the phragmoplast. The catalysed reaction is L-seryl-[protein] + ATP = O-phospho-L-seryl-[protein] + ADP + H(+). It catalyses the reaction L-threonyl-[protein] + ATP = O-phospho-L-threonyl-[protein] + ADP + H(+). Phosphorylates specifically 'Ser-10' of histone H3 in vitro and colocalizes with phosphorylated histone H3 during mitosis. Associates with cytoskeletal structures that are necessary for cytokinesis and with the microtubule spindle. Also colocalizes with gamma-tubulin and function in microtubule organizing centers (MTOCs). In contrast with the mammalian B-type Aurora, AUR1 has no kinase activity toward 'Ser-28' of histone H3. This Arabidopsis thaliana (Mouse-ear cress) protein is Serine/threonine-protein kinase Aurora-1 (AUR1).